A 174-amino-acid polypeptide reads, in one-letter code: ATP synthase subunit b 2 (174 aa).

A helical membrane pass occupies residues Ile-27–Pro-47.

This sequence belongs to the ATPase B chain family. In terms of assembly, F-type ATPases have 2 components, F(1) - the catalytic core - and F(0) - the membrane proton channel. F(1) has five subunits: alpha(3), beta(3), gamma(1), delta(1), epsilon(1). F(0) has three main subunits: a(1), b(2) and c(10-14). The alpha and beta chains form an alternating ring which encloses part of the gamma chain. F(1) is attached to F(0) by a central stalk formed by the gamma and epsilon chains, while a peripheral stalk is formed by the delta and b chains.

The protein localises to the cell inner membrane. In terms of biological role, f(1)F(0) ATP synthase produces ATP from ADP in the presence of a proton or sodium gradient. F-type ATPases consist of two structural domains, F(1) containing the extramembraneous catalytic core and F(0) containing the membrane proton channel, linked together by a central stalk and a peripheral stalk. During catalysis, ATP synthesis in the catalytic domain of F(1) is coupled via a rotary mechanism of the central stalk subunits to proton translocation. Functionally, component of the F(0) channel, it forms part of the peripheral stalk, linking F(1) to F(0). The b'-subunit is a diverged and duplicated form of b found in plants and photosynthetic bacteria. The polypeptide is ATP synthase subunit b 2 (atpF2) (Dinoroseobacter shibae (strain DSM 16493 / NCIMB 14021 / DFL 12)).